Reading from the N-terminus, the 45-residue chain is uncharacterized protein (45 aa).

An N-terminal signal peptide occupies residues 1–19 (MTFQILFLFVFHFVYIFRA).

This is an uncharacterized protein from Saccharomyces cerevisiae (strain ATCC 204508 / S288c) (Baker's yeast).